Consider the following 221-residue polypeptide: Putative transmembrane protein ORF25 (221 aa).

The signal sequence occupies residues 1–23 (MTLAAKLIVLVYVALCFVNESTS). N-linked (GlcNAc...) asparagine; by host glycans are attached at residues asparagine 19 and asparagine 179. At 24–191 (QDHSNIYHET…LAKARGVPMS (168 aa)) the chain is on the extracellular side. The helical transmembrane segment at 192–212 (VSVISGICAIILVIFPIFITI) threads the bilayer. Topologically, residues 213 to 221 (ANLRRVYLH) are cytoplasmic.

Its subcellular location is the host membrane. In Ostreid herpesvirus 1 (isolate France) (OsHV-1), this protein is Putative transmembrane protein ORF25.